We begin with the raw amino-acid sequence, 217 residues long: Kunitz-type trypsin inhibitor-like 1 protein (217 aa).

An N-terminal signal peptide occupies residues 1-26; that stretch reads MKPLSPLTLSFFLFVFITNLSLAFSN. 2 disulfide bridges follow: cysteine 70-cysteine 115 and cysteine 168-cysteine 175. Asparagine 191 carries N-linked (GlcNAc...) asparagine glycosylation.

Belongs to the protease inhibitor I3 (leguminous Kunitz-type inhibitor) family. In terms of tissue distribution, expressed in roots, leaves, epidermal layers of elongating stems, meristems and in the vascular system.

Its subcellular location is the secreted. Functionally, might act as a protease inhibitor involved in plant defense responses. The chain is Kunitz-type trypsin inhibitor-like 1 protein (PIP20-1) from Pisum sativum (Garden pea).